Consider the following 242-residue polypeptide: Megakaryocyte and platelet inhibitory receptor G6b (242 aa).

The N-terminal stretch at 1–17 is a signal peptide; that stretch reads MALVLPLLPLLLSKVQG. N-linked (GlcNAc...) asparagine glycans are attached at residues asparagine 32 and asparagine 112. Residues 141 to 161 traverse the membrane as a helical segment; it reads VLIPLLGVGLVLGLGVAGVVW. 2 consecutive short sequence motifs (ITIM motif) follow at residues 210 to 215 and 236 to 241; these read LHYADL and TVYAVV. Tyrosine 212 carries the post-translational modification Phosphotyrosine.

In terms of assembly, interacts (via ITIM motif) with PTPN6 and PTPN11. Binds to heparin. In terms of processing, N-glycosylated. May be O-glycosylated. Post-translationally, phosphorylated. Expressed in mature megakaryocytes and platelets. Not expressed by immature megakaryocytes.

Its subcellular location is the cell membrane. In terms of biological role, inhibitory receptor that acts as a critical regulator of hematopoietic lineage differentiation, megakaryocyte function and platelet production. Inhibits platelet aggregation and activation by agonists such as ADP and collagen-related peptide. This regulation of megakaryocate function as well as platelet production ann activation is done through the inhibition (via the 2 ITIM motifs) of the receptors CLEC1B and GP6:FcRgamma signaling. Appears to operate in a calcium-independent manner. In Mus musculus (Mouse), this protein is Megakaryocyte and platelet inhibitory receptor G6b.